The following is a 223-amino-acid chain: Small ribosomal subunit protein uS3 (223 aa).

Positions 39-115 (IRKYIEKNLA…RVFINIVEIK (77 aa)) constitute a KH type-2 domain.

Belongs to the universal ribosomal protein uS3 family. As to quaternary structure, part of the 30S ribosomal subunit. Forms a tight complex with proteins S10 and S14.

In terms of biological role, binds the lower part of the 30S subunit head. Binds mRNA in the 70S ribosome, positioning it for translation. The sequence is that of Small ribosomal subunit protein uS3 from Leuconostoc citreum (strain KM20).